The sequence spans 149 residues: Large ribosomal subunit protein uL15 (149 aa).

Residues 1–61 are disordered; it reads MELNSLRPAL…GGQMPLQRRL (61 aa). Positions 30 to 39 are enriched in basic residues; it reads TATKGHKGQK.

This sequence belongs to the universal ribosomal protein uL15 family. Part of the 50S ribosomal subunit.

In terms of biological role, binds to the 23S rRNA. The chain is Large ribosomal subunit protein uL15 from Trichlorobacter lovleyi (strain ATCC BAA-1151 / DSM 17278 / SZ) (Geobacter lovleyi).